A 272-amino-acid polypeptide reads, in one-letter code: MTKELSIGSVKMGGGRLLVLIAGPCVIESEEATLRHAERLMTICNGLGMPLIFKSSYDKANRTSINAFRGPGMDEGLRILSKVKESLGIPVLSDIHSIEQVAPAAQVLDVLQIPAFLCRQTDLVVAAAKTGKVVNVKKGQFLAPWDMRNVVGKVAASGNENIILTERGASFGYNNLVVDMRSFPVMRSYGYPVVFDATHSVQLPGGQGESSGGQREFVETLSRAAVATGIDGIFMEVHEDPSCALCDGPNSIPLAELPALLKRLQALDAVVR.

Belongs to the KdsA family.

The protein localises to the cytoplasm. The enzyme catalyses D-arabinose 5-phosphate + phosphoenolpyruvate + H2O = 3-deoxy-alpha-D-manno-2-octulosonate-8-phosphate + phosphate. It participates in carbohydrate biosynthesis; 3-deoxy-D-manno-octulosonate biosynthesis; 3-deoxy-D-manno-octulosonate from D-ribulose 5-phosphate: step 2/3. It functions in the pathway bacterial outer membrane biogenesis; lipopolysaccharide biosynthesis. The protein is 2-dehydro-3-deoxyphosphooctonate aldolase of Trichlorobacter lovleyi (strain ATCC BAA-1151 / DSM 17278 / SZ) (Geobacter lovleyi).